Here is a 207-residue protein sequence, read N- to C-terminus: MLKRIVGLPARRCFHRTSFLLGSDFETVHIPNTNHFKDLLIENGKFQEDQATTIVEIMTDAIRGGVNHVSQDLAKREKLTQLSYQQRVDFAKLRDQLLSADRSEFHNIQNEYESVKNDLEKLRNKLREEITKTNAGFKLDLSLEKGRIREESSHHDLQIKEIDTKIEQEVTNMKMQIDSVKTQVMQWLIGVCTGTFALVLAYMRLLT.

Residues 100-136 (ADRSEFHNIQNEYESVKNDLEKLRNKLREEITKTNAG) are a coiled coil. The chain crosses the membrane as a helical span at residues 184–206 (VMQWLIGVCTGTFALVLAYMRLL).

Belongs to the CCDC90 family.

Its subcellular location is the mitochondrion. The protein localises to the membrane. The sequence is that of Protein FMP32, mitochondrial (FMP32) from Saccharomyces cerevisiae (strain ATCC 204508 / S288c) (Baker's yeast).